Reading from the N-terminus, the 245-residue chain is Carbohydrate deacetylase (245 aa).

2 residues coordinate Mg(2+): H59 and H125.

It belongs to the YdjC deacetylase family. As to quaternary structure, homodimer. Requires Mg(2+) as cofactor.

Probably catalyzes the deacetylation of acetylated carbohydrates an important step in the degradation of oligosaccharides. This chain is Carbohydrate deacetylase, found in Listeria monocytogenes serotype 4b (strain CLIP80459).